Reading from the N-terminus, the 142-residue chain is Large ribosomal subunit protein uL11 (142 aa).

This sequence belongs to the universal ribosomal protein uL11 family. As to quaternary structure, part of the ribosomal stalk of the 50S ribosomal subunit. Interacts with L10 and the large rRNA to form the base of the stalk. L10 forms an elongated spine to which L12 dimers bind in a sequential fashion forming a multimeric L10(L12)X complex. One or more lysine residues are methylated.

Forms part of the ribosomal stalk which helps the ribosome interact with GTP-bound translation factors. This Dictyoglomus turgidum (strain DSM 6724 / Z-1310) protein is Large ribosomal subunit protein uL11.